We begin with the raw amino-acid sequence, 256 residues long: Cytokine-inducible SH2-containing protein (256 aa).

Residues 81–162 (WYWGSITASE…PDVVSLVQHY (82 aa)) enclose the SH2 domain. Residues 168–190 (ADTRSDSPDPAPTPALPVSKPDA) form a disordered region. The 49-residue stretch at 207 to 255 (KLVQPFVRRSSARSLQHLCRLVINRLVTDVDCLPLPRRMADYLRQYPFQ) folds into the SOCS box domain.

In terms of assembly, stably associated with the tyrosine-phosphorylated IL3 receptor beta chain and tyrosine-phosphorylated EPO receptor (EPOR).

It participates in protein modification; protein ubiquitination. Functionally, SOCS family proteins form part of a classical negative feedback system that regulates cytokine signal transduction. CIS is involved in the negative regulation of cytokines that signal through the JAK-STAT5 pathway such as erythropoietin, prolactin and interleukin 3 (IL3) receptor. Inhibits STAT5 trans-activation by suppressing its tyrosine phosphorylation. May be a substrate recognition component of a SCF-like ECS (Elongin BC-CUL2/5-SOCS-box protein) E3 ubiquitin-protein ligase complex which mediates the ubiquitination and subsequent proteasomal degradation of target proteins. This is Cytokine-inducible SH2-containing protein (Cish) from Rattus norvegicus (Rat).